We begin with the raw amino-acid sequence, 306 residues long: Protoheme IX farnesyltransferase (306 aa).

Transmembrane regions (helical) follow at residues 35–55 (LIVF…PTWL), 61–81 (LIAC…NCLV), 106–126 (LTLA…YVWV), 129–149 (LTMW…TVIL), 157–177 (IVIG…AMTG), 183–203 (ALIL…ALAL), 224–244 (EFTR…CLMP), 245–265 (FIFK…SIGF), and 286–306 (RFSL…HYLI).

This sequence belongs to the UbiA prenyltransferase family. Protoheme IX farnesyltransferase subfamily.

Its subcellular location is the cell inner membrane. The enzyme catalyses heme b + (2E,6E)-farnesyl diphosphate + H2O = Fe(II)-heme o + diphosphate. It participates in porphyrin-containing compound metabolism; heme O biosynthesis; heme O from protoheme: step 1/1. Its function is as follows. Converts heme B (protoheme IX) to heme O by substitution of the vinyl group on carbon 2 of heme B porphyrin ring with a hydroxyethyl farnesyl side group. This chain is Protoheme IX farnesyltransferase, found in Polaromonas naphthalenivorans (strain CJ2).